The primary structure comprises 531 residues: UDP-glucuronosyltransferase 2B13 (531 aa).

Positions 1 to 24 (MPVKCISVLLLLLQLSCCFSSGSC) are cleaved as a signal peptide. N-linked (GlcNAc...) asparagine glycosylation is found at asparagine 69, asparagine 101, and asparagine 317. The chain crosses the membrane as a helical span at residues 495–511 (VIGFLLACVAITTYLIV).

This sequence belongs to the UDP-glycosyltransferase family.

It localises to the microsome membrane. Its subcellular location is the endoplasmic reticulum membrane. It catalyses the reaction glucuronate acceptor + UDP-alpha-D-glucuronate = acceptor beta-D-glucuronoside + UDP + H(+). Its function is as follows. UDPGT is of major importance in the conjugation and subsequent elimination of potentially toxic xenobiotics and endogenous compounds. Acts on small phenolic agents such as 2-beta-naphthol and 4-methylumbelliferone as well as bulky phenolic compounds like 2-hydroxy- and 4-hydroxybiphenyl. In contrast to 2B16 it is active toward octylgallate. The polypeptide is UDP-glucuronosyltransferase 2B13 (UGT2B13) (Oryctolagus cuniculus (Rabbit)).